The primary structure comprises 758 residues: Calcium up-regulated protein E (758 aa).

The interval 1–22 (MINIEDISKSSNQSEEKQLKST) is disordered. 2 Ricin B-type lectin domains span residues 25-145 (KPKY…WTTF) and 156-288 (GYFQ…WIAN).

Belongs to the cup family.

The protein resides in the cytoplasm. Its subcellular location is the membrane. May play an important role in stabilizing and/or regulating the cell membrane during Ca(2+) stress or certain stages of development. The chain is Calcium up-regulated protein E (cupE) from Dictyostelium discoideum (Social amoeba).